We begin with the raw amino-acid sequence, 463 residues long: Rop guanine nucleotide exchange factor 4 (463 aa).

Disordered regions lie at residues 1 to 25 and 55 to 87; these read MESS…YRRT and GHEE…SDID. Acidic residues predominate over residues 59–68; that stretch reads DVSEDAEEPK. Basic and acidic residues predominate over residues 69-78; sequence DDVVNDVHGD. The region spanning 84-463 is the PRONE domain; sequence SDIDSAEDAE…VDRTVRNRDD (380 aa).

In terms of assembly, interacts with ARAC10/ROP11. As to expression, expressed in root vascular tissue and trichoblast cell files. Expressed in root metaxylem cell files. Expressed in guard cells of cotyledons, rosette leaves, sepals, petal, stigmas and siliques. Expressed in root metaxylem cell files.

It is found in the cytoplasm. The protein localises to the cell membrane. In terms of biological role, guanine-nucleotide exchange factor (GEF) that acts as an activator of Rop (Rho of plants) GTPases by promoting the exchange of GDP for GTP. In association with ROPGEF1, acts as a specific regulator of ARAC10/ROP11 function in ABA-mediated stomatal closure. This chain is Rop guanine nucleotide exchange factor 4 (ROPGEF4), found in Arabidopsis thaliana (Mouse-ear cress).